A 268-amino-acid polypeptide reads, in one-letter code: Undecaprenyl-diphosphatase (268 aa).

8 consecutive transmembrane segments (helical) span residues 1–21 (MSLIYLVVLALVQGITEFLPI), 39–59 (QGPLIDVMAHAGSLLAVLVYF), 85–105 (ALLVAASMPPIIIVAGALVAF), 110–130 (ALRSPRVIAIATLAFALPLWL), 144–164 (MSFKHAALIGIAQLFALIPGA), 187–207 (FSMLMAIPVIAAFGLVSLIEL), 221–241 (DGLIVAGLSFVTAWAAIAVLM), and 247–267 (IGFLPFALYRVGLGLALLVFF).

It belongs to the UppP family.

Its subcellular location is the cell inner membrane. It carries out the reaction di-trans,octa-cis-undecaprenyl diphosphate + H2O = di-trans,octa-cis-undecaprenyl phosphate + phosphate + H(+). Catalyzes the dephosphorylation of undecaprenyl diphosphate (UPP). Confers resistance to bacitracin. This is Undecaprenyl-diphosphatase from Maricaulis maris (strain MCS10) (Caulobacter maris).